A 2273-amino-acid chain; its full sequence is Nonribosomal peptide synthetase hasD (2273 aa).

The interval 100–446 is adenylation 1; the sequence is FHDQLQKHSS…AGLGLALGYF (347 aa). Positions 588–664 constitute a Carrier 1 domain; it reads ERGLGAVESV…NIAAAVVELS (77 aa). At S625 the chain carries O-(pantetheine 4'-phosphoryl)serine. The interval 696–1120 is condensation 1; that stretch reads IAPMTDMQTR…AAQPDTDLSN (425 aa). Positions 1156–1487 are adenylation 2; that stretch reads ENSIQAHPDI…SGVQVTPGYL (332 aa). Positions 1634–1714 constitute a Carrier 2 domain; it reads DLETDTQRVL…DLSLAIDELV (81 aa). Residue S1673 is modified to O-(pantetheine 4'-phosphoryl)serine. Residues 1735–2127 are condensation 2; sequence GQLPLSYLEK…QDLEVDMEYD (393 aa). Residues 2174-2200 are disordered; the sequence is PVGLTPSHEGSAELTNGTNKTDSTTGQ. The span at 2186–2200 shows a compositional bias: polar residues; sequence ELTNGTNKTDSTTGQ. The Carrier 3 domain maps to 2201–2273; sequence QELENNLTDV…LELATCAVII (73 aa). At S2235 the chain carries O-(pantetheine 4'-phosphoryl)serine.

This sequence belongs to the NRP synthetase family. Pantetheine 4'-phosphate is required as a cofactor.

It participates in secondary metabolite biosynthesis. Nonribosomal peptide synthetase; part of the gene cluster that mediates the biosynthesis of hexadehydro-astechrome (HAS), a tryptophan-derived iron(III)-complex that acts as a virulence factor in infected mice. Within the pathway, the NRPS condenses tryptophan and alanine to produce the Trp-Ala dipeptide. The 7-dimethylallyltryptophan synthase hasE then catalyzes the prenylation of the hasD-tethered tryptophan or the resulting tethered Trp-Ala dipeptide at the C-7 position of the indole moiety. HAS biosynthesis continues via tethered intermediates with the succesive actions of the cytochrome P450 monooxygenase hasH, the O-methyltransferase hasC, and the FAD-linked oxidoreductase hasG. The resulting O-methylated diketopiperazine is then released from hasD. Finally, three O-methylated diketopiperazine molecules assemble in a trimeric complex with Fe(III) to produce hexadehydro-astechrome. The polypeptide is Nonribosomal peptide synthetase hasD (Aspergillus fumigatus (strain CBS 144.89 / FGSC A1163 / CEA10) (Neosartorya fumigata)).